The sequence spans 182 residues: Small ribosomal subunit protein uS4c (182 aa).

The S4 RNA-binding domain occupies 82–143 (MRLDNILFRL…KQRSKALIQN (62 aa)).

The protein belongs to the universal ribosomal protein uS4 family. As to quaternary structure, part of the 30S ribosomal subunit. Contacts protein S5. The interaction surface between S4 and S5 is involved in control of translational fidelity.

Its subcellular location is the plastid. It localises to the chloroplast. One of the primary rRNA binding proteins, it binds directly to 16S rRNA where it nucleates assembly of the body of the 30S subunit. Functionally, with S5 and S12 plays an important role in translational accuracy. This is Small ribosomal subunit protein uS4c (rps4) from Libertia formosa (Snowy mermaid).